Consider the following 183-residue polypeptide: Large ribosomal subunit protein uL6 (183 aa).

This sequence belongs to the universal ribosomal protein uL6 family. As to quaternary structure, part of the 50S ribosomal subunit.

Its function is as follows. This protein binds to the 23S rRNA, and is important in its secondary structure. It is located near the subunit interface in the base of the L7/L12 stalk, and near the tRNA binding site of the peptidyltransferase center. In Malacoplasma penetrans (strain HF-2) (Mycoplasma penetrans), this protein is Large ribosomal subunit protein uL6.